The sequence spans 66 residues: Large ribosomal subunit protein bL31 (66 aa).

The Zn(2+) site is built by cysteine 16, cysteine 18, cysteine 36, and cysteine 39.

It belongs to the bacterial ribosomal protein bL31 family. Type A subfamily. As to quaternary structure, part of the 50S ribosomal subunit. Zn(2+) is required as a cofactor.

Binds the 23S rRNA. The polypeptide is Large ribosomal subunit protein bL31 (Campylobacter curvus (strain 525.92)).